A 103-amino-acid polypeptide reads, in one-letter code: MEFCPKCKSLMIYQGDKLVCRKCGYEKEADDSEELVIKVERNKEDVPVIEGENLKTLPTTKAICPACGHNEAFWWLRQLRAADESEVRFFRCTKCGKTWREYD.

Residues Cys4, Cys7, Cys20, Cys23, Cys64, Cys67, Cys92, and Cys95 each contribute to the Zn(2+) site. A C4-type zinc finger spans residues 4 to 23 (CPKCKSLMIYQGDKLVCRKC). The TFIIS-type zinc finger occupies 60–100 (TKAICPACGHNEAFWWLRQLRAADESEVRFFRCTKCGKTWR).

This sequence belongs to the archaeal RpoM/eukaryotic RPA12/RPB9/RPC11 RNA polymerase family.

Functionally, induces RNA cleavage activity in the RNA polymerase. In its presence, the cleavage activity of the RNA polymerase truncates the RNA back to position +15 in a stepwise manner by releasing mainly dinucleotides from the 3'-end of the nascent RNA. The truncated RNAs are able to continue elongation. Involved in transcriptional proofreading and fidelity. Misincorporation of nucleotides during elongation of transcription leads to arrested elongation complexes which are rescued by TFS-promoted removal of a dinucleotide from the 3'-end. TFS is able to induce a cleavage resynthesis cycle in stalled elongation complexes (resulting from the next missing nucleotide or a reduced incorporation rate of a wrong nucleotide) preventing misincorporation and enabling proofreading in a post-incorporation manner. Pausing of elongation complexes is the main determinant of TFS-induced RNA cleavage. This is Transcription factor S from Archaeoglobus fulgidus (strain ATCC 49558 / DSM 4304 / JCM 9628 / NBRC 100126 / VC-16).